A 461-amino-acid polypeptide reads, in one-letter code: MEPGGDGAEDDVGAGIGPPAPGWCLRGRCRVGSQREDVGWWRSWLQQSYQAVKEKSSEALEFMKRDLTEFTQVVQRDTACTIAATASVVKEKLTTEGSSGATEKMKKGLSDFLGVISDTFAPSPDKTIDCDVITLMGTPSGTAEPYDGTKARLYSLQSDPATYCNEPDGPPELFDAWLSQFCLEEKKGEISELLVGSPSIRALYTKMVPAAVSHSEFWHRYFYKVHQLEQEQARRDALKQRAEQSISEEPGWEEEEEELAGVSPTSLKEAKVPVARPSTSPEGGPGPQSPCEENLVTPVEPPTEVTPSESSESVSLVTQIAKPPPASEAPALPKDLSQKLLEASLEEQDLAVDTGETGPPPRAQSKPHTPACRPSGPEPRPPARVETLREEILTDLRVFELNSDSGKSTPSNNGKKGSSTDISEDWEKDFDLDMTEEEVQMALSKVDASGELEDVEWEDWD.

Ser123 and Ser197 each carry phosphoserine. The region spanning 177-229 (WLSQFCLEEKKGEISELLVGSPSIRALYTKMVPAAVSHSEFWHRYFYKVHQLE) is the BSD domain. Residues 239 to 384 (KQRAEQSISE…SGPEPRPPAR (146 aa)) form a disordered region. A compositionally biased stretch (acidic residues) spans 250 to 259 (PGWEEEEEEL). Low complexity predominate over residues 295 to 318 (LVTPVEPPTEVTPSESSESVSLVT). Thr387 carries the post-translational modification Phosphothreonine. The interval 398–430 (VFELNSDSGKSTPSNNGKKGSSTDISEDWEKDF) is disordered. The span at 402–421 (NSDSGKSTPSNNGKKGSSTD) shows a compositional bias: polar residues. Phosphoserine occurs at positions 418, 419, and 449.

The polypeptide is BSD domain-containing protein 1 (BSDC1) (Bos taurus (Bovine)).